Consider the following 315-residue polypeptide: Ribosomal protein L11 methyltransferase (315 aa).

Residues T161, G182, D204, and N248 each coordinate S-adenosyl-L-methionine.

Belongs to the methyltransferase superfamily. PrmA family.

It localises to the cytoplasm. It carries out the reaction L-lysyl-[protein] + 3 S-adenosyl-L-methionine = N(6),N(6),N(6)-trimethyl-L-lysyl-[protein] + 3 S-adenosyl-L-homocysteine + 3 H(+). Its function is as follows. Methylates ribosomal protein L11. The chain is Ribosomal protein L11 methyltransferase from Shouchella clausii (strain KSM-K16) (Alkalihalobacillus clausii).